A 161-amino-acid chain; its full sequence is Nucleotide-binding protein mma_0840 (161 aa).

This sequence belongs to the YajQ family.

Functionally, nucleotide-binding protein. The chain is Nucleotide-binding protein mma_0840 from Janthinobacterium sp. (strain Marseille) (Minibacterium massiliensis).